The chain runs to 1097 residues: DNA polymerase catalytic subunit (1097 aa).

The disordered stretch occupies residues 1069–1097; sequence RGGDDSDGGDSEKENMDTERSSSHEAMET. Positions 1078–1097 are enriched in basic and acidic residues; it reads DSEKENMDTERSSSHEAMET.

It belongs to the DNA polymerase type-B family.

It localises to the host nucleus. It carries out the reaction DNA(n) + a 2'-deoxyribonucleoside 5'-triphosphate = DNA(n+1) + diphosphate. The polypeptide is DNA polymerase catalytic subunit (UL54) (Murid herpesvirus 1 (strain Smith) (MuHV-1)).